Reading from the N-terminus, the 94-residue chain is Ig kappa-B5 chain V region 2699 (94 aa).

The framework-1 stretch occupies residues 1–23; that stretch reads AFELTQTPSSVEAAVGGTVTINC. Positions 24–34 are complementarity-determining-1; it reads QASTDISSNLA. The segment at 35–49 is framework-2; sequence WYTPKPGSPPKLLIY. A complementarity-determining-2 region spans residues 50-56; it reads SASTLAS. Residues 57–82 form a framework-3 region; that stretch reads GVSSRFKGSGSGVLITLTISDLECGV. Position 83 (Ser-83) is a region of interest, complementarity-determining-3. The tract at residues 84–93 is framework-4; that stretch reads FGGGTKVVVE.

In Oryctolagus cuniculus (Rabbit), this protein is Ig kappa-B5 chain V region 2699.